Reading from the N-terminus, the 199-residue chain is Holliday junction branch migration complex subunit RuvA (199 aa).

Residues 1 to 64 (MFAYIKGTVE…EDIAVLYGFG (64 aa)) form a domain I region. Positions 65–143 (TVEELTMFEM…KEQLTSSIPM (79 aa)) are domain II. A flexible linker region spans residues 144 to 151 (TSPENNEV). Residues 152–199 (TGDSVLSEAVSALMVLGYGSAEASSTISGIYEKGISVEELVKKALKSL) form a domain III region.

It belongs to the RuvA family. In terms of assembly, homotetramer. Forms an RuvA(8)-RuvB(12)-Holliday junction (HJ) complex. HJ DNA is sandwiched between 2 RuvA tetramers; dsDNA enters through RuvA and exits via RuvB. An RuvB hexamer assembles on each DNA strand where it exits the tetramer. Each RuvB hexamer is contacted by two RuvA subunits (via domain III) on 2 adjacent RuvB subunits; this complex drives branch migration. In the full resolvosome a probable DNA-RuvA(4)-RuvB(12)-RuvC(2) complex forms which resolves the HJ.

The protein localises to the cytoplasm. Functionally, the RuvA-RuvB-RuvC complex processes Holliday junction (HJ) DNA during genetic recombination and DNA repair, while the RuvA-RuvB complex plays an important role in the rescue of blocked DNA replication forks via replication fork reversal (RFR). RuvA specifically binds to HJ cruciform DNA, conferring on it an open structure. The RuvB hexamer acts as an ATP-dependent pump, pulling dsDNA into and through the RuvAB complex. HJ branch migration allows RuvC to scan DNA until it finds its consensus sequence, where it cleaves and resolves the cruciform DNA. This chain is Holliday junction branch migration complex subunit RuvA, found in Ruminiclostridium cellulolyticum (strain ATCC 35319 / DSM 5812 / JCM 6584 / H10) (Clostridium cellulolyticum).